The chain runs to 500 residues: Inner membrane transporter YjeM (500 aa).

Residues 1–10 (MTHTIKKMSL) lie on the Cytoplasmic side of the membrane. A helical membrane pass occupies residues 11–31 (IGLILMIFTSVFGFANSPSAF). Topologically, residues 32–37 (YLMGYS) are periplasmic. Residues 38–58 (AIPWYIFSALLFFIPFALMMA) traverse the membrane as a helical segment. Residues 59–83 (EMGSAYRKEEGGIYSWMNNSVGPRY) lie on the Cytoplasmic side of the membrane. The helical transmembrane segment at 84-104 (AFIGTFMWFSSYVIWMVSTAA) threads the bilayer. Over 105 to 124 (KIWVPFSTFVFGADMTQHWR) the chain is Periplasmic. Residues 125–145 (IAGLEPTQVVGLLAVGWMILV) traverse the membrane as a helical segment. Residues 146 to 163 (TCVAARGINKIARITAVG) lie on the Cytoplasmic side of the membrane. A helical membrane pass occupies residues 164-184 (GIAVMCLNLVLLLVSVAILLL). Over 185–209 (NGGHFAQEINFTSSPNPGYHSGLAM) the chain is Periplasmic. Residues 210–230 (LSFVVFAIFAYGGIEAVGGLV) traverse the membrane as a helical segment. The Cytoplasmic portion of the chain corresponds to 231-243 (DKTEKPEKNFAKG). Residues 244 to 264 (IVFAAIVISIGYSLAIFLWGV) form a helical membrane-spanning segment. Over 265–308 (STNWQQILSNSAVNLGNITYILMSSLGTTLGNALNLSPEAAMTV) the chain is Periplasmic. Residues 309-329 (GVWFARITGLSMFLAYTGAFF) traverse the membrane as a helical segment. The Cytoplasmic portion of the chain corresponds to 330–361 (TLSYSPLKAIIQGTPKALWPAPMTTLNANGMP). The helical transmembrane segment at 362–382 (ATAMWLQCVLVSLFILLVSFG) threads the bilayer. Residues 383–394 (GDTASAFYNKLT) lie on the Periplasmic side of the membrane. The chain crosses the membrane as a helical span at residues 395–415 (LMANVSMTLPYLFLALAFPFF). The Cytoplasmic segment spans residues 416–433 (KARQDLERPFVLFKTKAS). Residues 434 to 454 (TLVATGVVVLVVTFANVFTII) traverse the membrane as a helical segment. Over 455 to 462 (QPVIEAGD) the chain is Periplasmic. The helical transmembrane segment at 463–483 (WDSALWMIGGPIFFSLLAMAI) threads the bilayer. Residues 484–500 (YQNYSSRMSADPEWAAE) lie on the Cytoplasmic side of the membrane.

It belongs to the amino acid-polyamine-organocation (APC) superfamily.

The protein localises to the cell inner membrane. This Salmonella typhi protein is Inner membrane transporter YjeM (yjeM).